Consider the following 191-residue polypeptide: Signal peptidase IB (191 aa).

The Cytoplasmic portion of the chain corresponds to 1 to 7; the sequence is MKKEILE. A helical transmembrane segment spans residues 8-28; that stretch reads WIISIAVAFVILFIVGKFIVT. Over 29-191 the chain is Extracellular; it reads PYTIKGESMD…HNFNPENTKN (163 aa). Residues S36 and K77 contribute to the active site.

This sequence belongs to the peptidase S26 family.

The protein resides in the cell membrane. The enzyme catalyses Cleavage of hydrophobic, N-terminal signal or leader sequences from secreted and periplasmic proteins.. Its function is as follows. Essential for cell viability. The sequence is that of Signal peptidase IB (spsB) from Staphylococcus aureus (strain COL).